Consider the following 183-residue polypeptide: Troponin I, fast skeletal muscle (183 aa).

Serine 2 is modified (N-acetylserine). Residues 2–48 (SDEEKKRRAATARRQHLKSAMLQLAVTEIEKEAAAKEVEKQNYLAEH) are involved in binding TNC. Residues 97-117 (SQKLFDLRGKFKRPPLRRVRM) form an involved in binding TNC and actin region.

This sequence belongs to the troponin I family. In terms of assembly, binds to actin and tropomyosin. Post-translationally, the N-terminus is blocked.

Functionally, troponin I is the inhibitory subunit of troponin, the thin filament regulatory complex which confers calcium-sensitivity to striated muscle actomyosin ATPase activity. In Gallus gallus (Chicken), this protein is Troponin I, fast skeletal muscle (TNNI2).